The following is a 305-amino-acid chain: Mas-related G-protein coupled receptor member A7 (305 aa).

Residues 1 to 17 are Extracellular-facing; that stretch reads MDETSPRSIDIESLIPN. The helical transmembrane segment at 18–38 threads the bilayer; that stretch reads LMIIIFGLVGLTGNAIVLWLL. The Cytoplasmic segment spans residues 39–46; the sequence is GFCLHRNA. Residues 47-67 form a helical membrane-spanning segment; that stretch reads FLVYILNLALADFLFLLCHFI. The Extracellular segment spans residues 68–81; sequence NSAMFLLKVPIPNG. Residues 82–102 form a helical membrane-spanning segment; it reads IFVYCFYTIKMVLYITGLSML. The Cytoplasmic segment spans residues 103 to 129; it reads SAISTERCLSVLCPIWYHCRRPEHTST. The chain crosses the membrane as a helical span at residues 130–150; the sequence is VMCAVIWIFSVLICILKEYFC. Topologically, residues 151 to 167 are extracellular; the sequence is DFFGTKLGNYYVCQASN. A helical membrane pass occupies residues 168-188; it reads FFMGAYLMFLFVVLCLSTLAL. Residues 189–211 are Cytoplasmic-facing; sequence LARLFCGAEKMKFTRLFVTIMLT. The chain crosses the membrane as a helical span at residues 212–232; sequence ILVFLLCGLPWGFFWFLLIWI. The Extracellular portion of the chain corresponds to 233 to 244; it reads KGGFSVLDYRLY. The helical transmembrane segment at 245 to 265 threads the bilayer; the sequence is LASIVLTVVNSCANPIIYFFV. The Cytoplasmic segment spans residues 266–305; that stretch reads GSFRHRLKHQTLKMVLQSALQDTPETHENMVEMSRIKAEQ.

This sequence belongs to the G-protein coupled receptor 1 family. Mas subfamily. Expressed in a subset of sensory neurons that includes nociceptors. Expressed in the subclass of non-peptidergic sensory neurons that are IB4(+) and VR1(-).

It is found in the cell membrane. Functionally, orphan receptor. May be a receptor for RFamide-family neuropeptides such as NPFF and NPAF, which are analgesic in vivo. May regulate nociceptor function and/or development, including the sensation or modulation of pain. This is Mas-related G-protein coupled receptor member A7 (Mrgpra7) from Mus musculus (Mouse).